The sequence spans 320 residues: Cytochrome f (320 aa).

The N-terminal stretch at 1-35 (MQNRNTFSWVKEQMTRFISVSIMIYVITRTSISNA) is a signal peptide. Tyr36, Cys56, Cys59, and His60 together coordinate heme. The chain crosses the membrane as a helical span at residues 286 to 306 (VQGLLFFLASVILAQIFLVLK).

The protein belongs to the cytochrome f family. The 4 large subunits of the cytochrome b6-f complex are cytochrome b6, subunit IV (17 kDa polypeptide, petD), cytochrome f and the Rieske protein, while the 4 small subunits are PetG, PetL, PetM and PetN. The complex functions as a dimer. Requires heme as cofactor.

It is found in the plastid. Its subcellular location is the chloroplast thylakoid membrane. Functionally, component of the cytochrome b6-f complex, which mediates electron transfer between photosystem II (PSII) and photosystem I (PSI), cyclic electron flow around PSI, and state transitions. This chain is Cytochrome f, found in Drimys granadensis.